We begin with the raw amino-acid sequence, 2058 residues long: E3 ubiquitin-protein ligase ubr-1 (2058 aa).

A UBR-type zinc finger spans residues 93 to 164; it reads QICGHVFKNG…EGYACANHEK (72 aa). A disordered region spans residues 1107–1175; that stretch reads VPEAAPAPEN…TPSEKSETVV (69 aa). The span at 1108-1119 shows a compositional bias: low complexity; it reads PEAAPAPENKPA. 2 stretches are compositionally biased toward basic and acidic residues: residues 1123–1138 and 1153–1175; these read EEIK…EMRQ and KKIE…ETVV. The segment at 1217–1335 adopts an RING-type; atypical zinc-finger fold; sequence LTCILCQEDE…GEYQCPLCKR (119 aa). Disordered stretches follow at residues 1381-1416 and 1475-1499; these read LSSE…DTAN and PAAT…ESGK. Residues 1388–1397 are compositionally biased toward basic residues; sequence KKGHSRKRSH. The segment covering 1398–1413 has biased composition (basic and acidic residues); sequence SERSLLDLEKLSKDPD. Residues 1486-1495 show a composition bias toward polar residues; it reads GSSSRIPESQ. Residues 1695-1715 form a helical membrane-spanning segment; sequence ILQIDILSLAISLMMTIGWTW.

Belongs to the E3 ubiquitin-protein ligase UBR1-like family. As to quaternary structure, interacts with ubc-1. Component of a complex containing at least ced-3, ubr-1 and possibly ate-1. Within complex interacts with ced-3 (via the p17 subunit); this interaction is required for the ced-3-mediated cleavage and subsequent degradation of the heterochronic protein lin-28. As to expression, expressed in pharyngeal muscles, body wall muscles and a subset of neurons throughout postembryonic development. Prominently expressed in premotor interneurons, but not expressed in ventral cord motor neurons. Weakly expressed in hypodermal seam cells.

Its subcellular location is the membrane. The enzyme catalyses S-ubiquitinyl-[E2 ubiquitin-conjugating enzyme]-L-cysteine + [acceptor protein]-L-lysine = [E2 ubiquitin-conjugating enzyme]-L-cysteine + N(6)-ubiquitinyl-[acceptor protein]-L-lysine.. It participates in protein modification; protein ubiquitination. Its function is as follows. E3 ubiquitin-protein ligase which is a component of the N-end rule pathway. Recognizes and binds to proteins bearing specific N-terminal residues that are destabilizing according to the N-end rule, leading to their ubiquitination and subsequent degradation. In complex with ced-3, required for the ced-3-mediated cleavage and subsequent degradation of the heterochronic protein lin-28 to regulate seam cell fate patterning during larval development. Negatively regulates glutamate metabolism through the aspartate aminotransferase got-1.2. Modulation of glutamate levels most likely controls locomotory behavior, in particular backwards locomotion or 'reversals'. The polypeptide is E3 ubiquitin-protein ligase ubr-1 (Caenorhabditis elegans).